Reading from the N-terminus, the 256-residue chain is Ubiquinone biosynthesis O-methyltransferase (256 aa).

Residues Arg44, Gly80, Asp101, and Met144 each coordinate S-adenosyl-L-methionine.

Belongs to the methyltransferase superfamily. UbiG/COQ3 family.

The enzyme catalyses a 3-demethylubiquinol + S-adenosyl-L-methionine = a ubiquinol + S-adenosyl-L-homocysteine + H(+). It carries out the reaction a 3-(all-trans-polyprenyl)benzene-1,2-diol + S-adenosyl-L-methionine = a 2-methoxy-6-(all-trans-polyprenyl)phenol + S-adenosyl-L-homocysteine + H(+). The protein operates within cofactor biosynthesis; ubiquinone biosynthesis. Its function is as follows. O-methyltransferase that catalyzes the 2 O-methylation steps in the ubiquinone biosynthetic pathway. The sequence is that of Ubiquinone biosynthesis O-methyltransferase from Methylocella silvestris (strain DSM 15510 / CIP 108128 / LMG 27833 / NCIMB 13906 / BL2).